A 279-amino-acid chain; its full sequence is S-methyl-5'-thioadenosine phosphorylase (279 aa).

Phosphate-binding positions include Ser-13, 55–56, and 88–89; these read RH and TA. Residue Met-191 coordinates substrate. Residue Thr-192 participates in phosphate binding. 215 to 217 is a binding site for substrate; that stretch reads DYD.

This sequence belongs to the PNP/MTAP phosphorylase family. MTAP subfamily. In terms of assembly, homotrimer.

It localises to the cytoplasm. The protein localises to the nucleus. The catalysed reaction is S-methyl-5'-thioadenosine + phosphate = 5-(methylsulfanyl)-alpha-D-ribose 1-phosphate + adenine. Its pathway is amino-acid biosynthesis; L-methionine biosynthesis via salvage pathway; S-methyl-5-thio-alpha-D-ribose 1-phosphate from S-methyl-5'-thioadenosine (phosphorylase route): step 1/1. Its function is as follows. Catalyzes the reversible phosphorylation of S-methyl-5'-thioadenosine (MTA) to adenine and 5-methylthioribose-1-phosphate. Involved in the breakdown of MTA, a major by-product of polyamine biosynthesis. Responsible for the first step in the methionine salvage pathway after MTA has been generated from S-adenosylmethionine. Has broad substrate specificity with 6-aminopurine nucleosides as preferred substrates. The polypeptide is S-methyl-5'-thioadenosine phosphorylase (Aedes aegypti (Yellowfever mosquito)).